Consider the following 107-residue polypeptide: UPF0060 membrane protein mll7841 (107 aa).

Transmembrane regions (helical) follow at residues 4 to 24 (LFYTAAALAEIAGCFSVWAWW), 30 to 50 (PLWLAPGFVSLLLFAWLLALV), 60 to 80 (AAYGGIYIAASLAWLWLVEGV), and 87 to 107 (LAGAALCIAGASLILLAPRGA).

It belongs to the UPF0060 family.

It is found in the cell inner membrane. This is UPF0060 membrane protein mll7841 from Mesorhizobium japonicum (strain LMG 29417 / CECT 9101 / MAFF 303099) (Mesorhizobium loti (strain MAFF 303099)).